A 279-amino-acid chain; its full sequence is Dehydrogenase/reductase SDR family member 4 (279 aa).

37 to 61 (LVTASTDGIGFAIARRLAQDGAHVV) contributes to the NADP(+) binding site. Residue Lys-93 is modified to N6-acetyllysine; alternate. Lys-93 is subject to N6-succinyllysine; alternate. At Lys-106 the chain carries N6-acetyllysine. Ser-170 lines the substrate pocket. Tyr-183 (proton acceptor) is an active-site residue. Residue Lys-187 coordinates NADP(+). Ser-221 is modified (phosphoserine). N6-succinyllysine is present on Lys-235. Residues 277-279 (SHL) carry the Peroxisomal targeting signal motif.

This sequence belongs to the short-chain dehydrogenases/reductases (SDR) family. Homotetramer.

It is found in the peroxisome. It carries out the reaction a secondary alcohol + NADP(+) = a ketone + NADPH + H(+). The catalysed reaction is 3alpha-hydroxy-5beta-pregnan-20-one + NADP(+) = 5beta-pregnan-3,20-dione + NADPH + H(+). The enzyme catalyses 5beta-dihydrotestosterone + NADPH + H(+) = 5beta-androstane-3alpha,17beta-diol + NADP(+). It catalyses the reaction all-trans-retinol + NADP(+) = all-trans-retinal + NADPH + H(+). It carries out the reaction isatin + NADPH + H(+) = 3-hydroxyindolin-2-one + NADP(+). NADPH-dependent oxidoreductase which catalyzes the reduction of a variety of compounds bearing carbonyl groups including ketosteroids, alpha-dicarbonyl compounds, aldehydes, aromatic ketones and quinones. Reduces all-trans-retinal and 9-cis retinal. Reduces 3-ketosteroids and benzil into 3alpha-hydroxysteroids and S-benzoin, respectively, in contrast to the stereoselectivity of primates DHRS4s which produce 3beta-hydroxysteroids and R-benzoin. In the reverse reaction, catalyzes the NADP-dependent oxidation of 3alpha-hydroxysteroids and alcohol, but with much lower efficiency. Involved in the metabolism of 3alpha-hydroxysteroids, retinoid, isatin and xenobiotic carbonyl compounds. This is Dehydrogenase/reductase SDR family member 4 (DHRS4) from Bos taurus (Bovine).